The sequence spans 99 residues: Sec-independent protein translocase protein TatA (99 aa).

A helical membrane pass occupies residues 1–21 (MIGNLKPLEIVLIIAVILLLF). The interval 46–99 (AMKKDDAATAAPTTETVADDTVPPQSTTARTIQAAPGDVTSSRPVSEAKPTTQS) is disordered. Residues 53–69 (ATAAPTTETVADDTVPP) are compositionally biased toward low complexity. Polar residues predominate over residues 84–99 (VTSSRPVSEAKPTTQS).

Belongs to the TatA/E family. The Tat system comprises two distinct complexes: a TatABC complex, containing multiple copies of TatA, TatB and TatC subunits, and a separate TatA complex, containing only TatA subunits. Substrates initially bind to the TatABC complex, which probably triggers association of the separate TatA complex to form the active translocon.

The protein localises to the cell membrane. Functionally, part of the twin-arginine translocation (Tat) system that transports large folded proteins containing a characteristic twin-arginine motif in their signal peptide across membranes. TatA could form the protein-conducting channel of the Tat system. The sequence is that of Sec-independent protein translocase protein TatA from Streptomyces griseus subsp. griseus (strain JCM 4626 / CBS 651.72 / NBRC 13350 / KCC S-0626 / ISP 5235).